We begin with the raw amino-acid sequence, 165 residues long: MLKIRLARGGAKKRPYYSIVVADSHSPRDGRFIEKVGTYNPLLKKDDANRVTLKVESIQEWLKKGAQPTDRVARFLAAQGLVAWTHGNNPEKGKPGKKAQERLAERAQREEERKQAEADAKAAAEAEKAAAAEAAAAAAAAPAVEEAPAEEAPAAEAPAEEAAEG.

Residues 84–165 (WTHGNNPEKG…EAPAEEAAEG (82 aa)) are disordered. Positions 89–130 (NPEKGKPGKKAQERLAERAQREEERKQAEADAKAAAEAEKAA) are enriched in basic and acidic residues. Residues 131 to 157 (AAEAAAAAAAAPAVEEAPAEEAPAAEA) show a composition bias toward low complexity.

It belongs to the bacterial ribosomal protein bS16 family.

In Caulobacter vibrioides (strain ATCC 19089 / CIP 103742 / CB 15) (Caulobacter crescentus), this protein is Small ribosomal subunit protein bS16.